We begin with the raw amino-acid sequence, 437 residues long: GTPase Era, mitochondrial (437 aa).

The transit peptide at 1–43 directs the protein to the mitochondrion; it reads MAAPSWRGARLVQSVLRVWQVGPHVARERVIPFSSLLGFQRRC. One can recognise an Era-type G domain in the interval 112 to 330; the sequence is RVLRVVLLGA…QYLLTQAQPG (219 aa). The interval 120-127 is G1; sequence GAPNAGKS. Residue 120 to 127 participates in GTP binding; sequence GAPNAGKS. The interval 146 to 150 is G2; that stretch reads HTTRC. The G3 stretch occupies residues 167 to 170; it reads DTPG. 167-171 contributes to the GTP binding site; it reads DTPGI. Phosphoserine is present on serine 173. 236–239 serves as a coordination point for GTP; that stretch reads NKVD. Residues 236–239 are G4; the sequence is NKVD. Residues 271 to 290 are disordered; it reads HSHPGTHCPSPAVKDPNTQS. A G5 region spans residues 308-310; sequence LSA. The region spanning 360-437 is the KH type-2 domain; the sequence is LPQEVPYNVQ…DIRLSVKLLK (78 aa).

The protein belongs to the TRAFAC class TrmE-Era-EngA-EngB-Septin-like GTPase superfamily. Era GTPase family.

The protein resides in the mitochondrion matrix. The protein localises to the mitochondrion inner membrane. Its function is as follows. Probable GTPase that plays a role in the mitochondrial ribosomal small subunit assembly. Specifically binds the 12S mitochondrial rRNA (12S mt-rRNA) to a 33 nucleotide section delineating the 3' terminal stem-loop region. May act as a chaperone that protects the 12S mt-rRNA on the 28S mitoribosomal subunit during ribosomal small subunit assembly. This is GTPase Era, mitochondrial (ERAL1) from Homo sapiens (Human).